Consider the following 150-residue polypeptide: Arginine repressor (150 aa).

The protein belongs to the ArgR family.

It localises to the cytoplasm. It participates in amino-acid biosynthesis; L-arginine biosynthesis [regulation]. Its function is as follows. Regulates arginine biosynthesis genes. In Clostridium botulinum (strain Eklund 17B / Type B), this protein is Arginine repressor.